The chain runs to 1219 residues: Pheromone-regulated membrane protein 10 (1219 aa).

The segment covering 1–11 (MMRTQSDEHVA) has biased composition (basic and acidic residues). 4 disordered regions span residues 1–273 (MMRT…IERE), 303–490 (LASF…DPFT), 503–533 (HDDD…EDYV), and 555–713 (EGNK…RPVK). The span at 42–53 (DENDDGHDDSDE) shows a compositional bias: acidic residues. Positions 57–68 (SVVIPTPSVVIV) are enriched in low complexity. The span at 104 to 115 (LKSPGTPTTYSP) shows a compositional bias: polar residues. The segment covering 136–155 (GSSLSSTTLMNTLLNSSGLG) has biased composition (low complexity). 2 stretches are compositionally biased toward acidic residues: residues 159–171 (TESE…DEEV) and 219–231 (QEEE…DDDG). Basic and acidic residues-rich tracts occupy residues 259 to 273 (ADRA…IERE), 330 to 346 (DDQR…RREN), and 395 to 421 (LDRR…EKER). Over residues 422 to 432 (QHHHHNHHHHH) the composition is skewed to basic residues. The span at 435–446 (ETGPNTGASSPF) shows a compositional bias: polar residues. Residues 448 to 470 (EEEKDREAEEAEILRDQARDLVN) show a composition bias toward basic and acidic residues. Low complexity predominate over residues 565 to 577 (TTVGDGTSTGDVS). Residues 598 to 615 (KSKTKTTQKLGLKKKKKE) show a composition bias toward basic residues. Residues 616–641 (LLKIIEDQRKEKEENKKRPKWYDKSR) show a composition bias toward basic and acidic residues. The segment covering 642–652 (STSPSPGGTPA) has biased composition (low complexity). Over residues 653–673 (PHHHHHIPGLHLHHHTKGHQR) the composition is skewed to basic residues. Positions 693-713 (GGDKPPDRPRSLRSEALRPVK) are enriched in basic and acidic residues. A run of 10 helical transmembrane segments spans residues 864-884 (PPWL…PYAF), 888-908 (WADI…QIIV), 918-938 (VFEV…GTIS), 945-965 (FCFA…YIVL), 983-1003 (MFYA…GAVV), 1021-1041 (LDPL…ALVN), 1049-1069 (PSML…GANI), 1075-1095 (SSYL…NLYS), 1100-1120 (GLAF…GVAS), and 1184-1204 (LGFT…AATL).

The protein belongs to the ThrE exporter (TC 2.A.79) family.

Its subcellular location is the membrane. This chain is Pheromone-regulated membrane protein 10, found in Yarrowia lipolytica (strain CLIB 122 / E 150) (Yeast).